The following is a 177-amino-acid chain: Putative pre-16S rRNA nuclease (177 aa).

It belongs to the YqgF nuclease family.

It localises to the cytoplasm. Functionally, could be a nuclease involved in processing of the 5'-end of pre-16S rRNA. The sequence is that of Putative pre-16S rRNA nuclease from Psychrobacter arcticus (strain DSM 17307 / VKM B-2377 / 273-4).